The primary structure comprises 152 residues: Small ribosomal subunit protein uS13 (152 aa).

It belongs to the universal ribosomal protein uS13 family. As to quaternary structure, part of the 30S ribosomal subunit. Forms a loose heterodimer with protein S19. Forms two bridges to the 50S subunit in the 70S ribosome.

Its function is as follows. Located at the top of the head of the 30S subunit, it contacts several helices of the 16S rRNA. In the 70S ribosome it contacts the 23S rRNA (bridge B1a) and protein L5 of the 50S subunit (bridge B1b), connecting the 2 subunits; these bridges are implicated in subunit movement. The sequence is that of Small ribosomal subunit protein uS13 from Pyrobaculum arsenaticum (strain DSM 13514 / JCM 11321 / PZ6).